Here is an 86-residue protein sequence, read N- to C-terminus: Large ribosomal subunit protein uL10 (86 aa).

Belongs to the universal ribosomal protein uL10 family. As to quaternary structure, part of the ribosomal stalk of the 50S ribosomal subunit. The N-terminus interacts with L11 and the large rRNA to form the base of the stalk. The C-terminus forms an elongated spine to which L12 dimers bind in a sequential fashion forming a multimeric L10(L12)X complex.

In terms of biological role, forms part of the ribosomal stalk, playing a central role in the interaction of the ribosome with GTP-bound translation factors. In Serratia marcescens, this protein is Large ribosomal subunit protein uL10 (rplJ).